The primary structure comprises 571 residues: Pectinesterase/pectinesterase inhibitor (571 aa).

Positions 27–178 are pectinesterase inhibitor; that stretch reads NSHQKAVESL…KILSSNAIDI (152 aa). The segment at 233–254 is disordered; it reads AQAGRPGAPADEGIGEGGGGGG. The pectinesterase stretch occupies residues 259–558; it reads THVVAKDGSG…TVANWLTPAN (300 aa). Residues Thr336 and Gln366 each contribute to the substrate site. The active-site Proton donor; for pectinesterase activity is the Asp389. Asp410 functions as the Nucleophile; for pectinesterase activity in the catalytic mechanism. Residues Arg479 and Trp481 each coordinate substrate.

It in the N-terminal section; belongs to the PMEI family. In the C-terminal section; belongs to the pectinesterase family.

The protein resides in the secreted. Its subcellular location is the cell wall. It carries out the reaction [(1-&gt;4)-alpha-D-galacturonosyl methyl ester](n) + n H2O = [(1-&gt;4)-alpha-D-galacturonosyl](n) + n methanol + n H(+). The protein operates within glycan metabolism; pectin degradation; 2-dehydro-3-deoxy-D-gluconate from pectin: step 1/5. Functionally, acts in the modification of cell walls via demethylesterification of cell wall pectin. This chain is Pectinesterase/pectinesterase inhibitor, found in Brassica campestris (Field mustard).